Here is a 73-residue protein sequence, read N- to C-terminus: Mauriporin (73 aa).

The first 22 residues, methionine 1–serine 22, serve as a signal peptide directing secretion.

It belongs to the non-disulfide-bridged peptide (NDBP) superfamily. Long chain multifunctional peptide (group 2) family. As to expression, expressed by the venom gland.

It localises to the secreted. The protein resides in the target cell membrane. Functionally, amphipathic peptide that displays potent antimicrobial activities against a range of Gram-positive and Gram-negative planktonic bacteria with MIC values in the range 5 uM to 10 uM. In more details, it is active on Listeria ivanovii (MIC=5 uM), Staphylococcus epidermidis (MIC=10 uM), Salmonella enterica (MIC=5 uM), Pseudomonas aeruginosa (ATCC 27853) (MIC=5 uM), Acinetobacter baumannii (MIC=5 uM), Klebsiella pneumoniae (MIC=5 uM), Escherichia coli (MIC=7.5 uM), Salmonella typhimurium (MIC=7.5 uM), Pseudomonas aeruginosa (ATCC 9027) (MIC=10 uM). Is also able to prevent P.aeruginosa biofilm formation while showing weak hemolytic activity towards human erythrocytes. Probably induces bacterial cell death through membrane permeabilization. Moreover, shows DNA-binding activities. Also exerts potent selective cytotoxic and antiproliferative activity against three different prostate cancer cell lines (IC(50)=4.4-7.8 uM), compared to non-tumorigenic cell lines (IC(50)=59.7 uM in Vero and 62.5 uM in HUVEC cells). This peptide possibly exerts its cytotoxic activity through a necrotic mode of cell death. Only shows diminished hemolytic activity against sheep erythrocytes. Does not induce cell death through apoptosis and consequently is not acting upon an intracellular target. In Androctonus mauritanicus (Fat-tailed scorpion), this protein is Mauriporin.